A 688-amino-acid polypeptide reads, in one-letter code: Alpha-1,4-glucan:maltose-1-phosphate maltosyltransferase (688 aa).

Residues K289, Q349, and D384 each contribute to the alpha-maltose 1-phosphate site. The active-site Nucleophile is the D420. Position 421 (N421) interacts with alpha-maltose 1-phosphate. The active-site Proton donor is the E449. K560–Y561 contacts alpha-maltose 1-phosphate.

It belongs to the glycosyl hydrolase 13 family. GlgE subfamily. In terms of assembly, homodimer.

The catalysed reaction is alpha-maltose 1-phosphate + [(1-&gt;4)-alpha-D-glucosyl](n) = [(1-&gt;4)-alpha-D-glucosyl](n+2) + phosphate. Its function is as follows. Maltosyltransferase that uses maltose 1-phosphate (M1P) as the sugar donor to elongate linear or branched alpha-(1-&gt;4)-glucans. Is involved in a branched alpha-glucan biosynthetic pathway from trehalose, together with TreS, Mak and GlgB. In Rhodospirillum rubrum (strain ATCC 11170 / ATH 1.1.1 / DSM 467 / LMG 4362 / NCIMB 8255 / S1), this protein is Alpha-1,4-glucan:maltose-1-phosphate maltosyltransferase.